Reading from the N-terminus, the 480-residue chain is EGF-like repeat and discoidin I-like domain-containing protein 3 (480 aa).

A signal peptide spans 1-23 (MKRSVAVWLLVGLSLGVPQFGKG). Positions 24-60 (DICDPNPCENGGICLPGLADGSFSCECPDGFTDPNCS) constitute an EGF-like 1 domain. 3 disulfide bridges follow: Cys26/Cys37, Cys31/Cys48, and Cys50/Cys59. A glycan (O-linked (GalNAc...) threonine) is linked at Thr73. 2 consecutive EGF-like domains span residues 74–117 (SAGP…IHCQ) and 119–155 (NINE…RNCQ). Intrachain disulfides connect Cys78–Cys89, Cys83–Cys105, and Cys107–Cys116. Thr88 is a glycosylation site (O-linked (Fuc...) threonine). Positions 96–98 (RGD) match the Cell attachment site motif. Ca(2+) is bound by residues Asn119, Ile120, and Glu122. 6 disulfides stabilise this stretch: Cys123–Cys134, Cys128–Cys143, Cys145–Cys154, Cys158–Cys314, Cys301–Cys305, and Cys319–Cys476. Ca(2+) is bound by residues Asp136 and Leu137. The N-linked (GlcNAc...) asparagine glycan is linked to Asn140. 2 F5/8 type C domains span residues 158–314 (CSGP…LLGC) and 319–476 (CSEP…LLGC).

Its subcellular location is the secreted. Promotes adhesion of endothelial cells through interaction with the alpha-v/beta-3 integrin receptor. Inhibits formation of vascular-like structures. May be involved in regulation of vascular morphogenesis of remodeling in embryonic development. The polypeptide is EGF-like repeat and discoidin I-like domain-containing protein 3 (EDIL3) (Homo sapiens (Human)).